A 527-amino-acid polypeptide reads, in one-letter code: GMP synthase [glutamine-hydrolyzing] (527 aa).

The 199-residue stretch at 4–202 (KILILDFGSQ…VLKICGAQPD (199 aa)) folds into the Glutamine amidotransferase type-1 domain. Cys81 acts as the Nucleophile in catalysis. Catalysis depends on residues His176 and Glu178. The region spanning 203-395 (WEMGHYIDEA…LGLPPAMVYR (193 aa)) is the GMPS ATP-PPase domain. ATP is bound at residue 230–236 (SGGVDSS).

In terms of assembly, homodimer.

The enzyme catalyses XMP + L-glutamine + ATP + H2O = GMP + L-glutamate + AMP + diphosphate + 2 H(+). It functions in the pathway purine metabolism; GMP biosynthesis; GMP from XMP (L-Gln route): step 1/1. Catalyzes the synthesis of GMP from XMP. This is GMP synthase [glutamine-hydrolyzing] from Paraburkholderia xenovorans (strain LB400).